We begin with the raw amino-acid sequence, 231 residues long: 6-phosphogluconolactonase (231 aa).

This sequence belongs to the glucosamine/galactosamine-6-phosphate isomerase family. 6-phosphogluconolactonase subfamily.

It catalyses the reaction 6-phospho-D-glucono-1,5-lactone + H2O = 6-phospho-D-gluconate + H(+). Its pathway is carbohydrate degradation; pentose phosphate pathway; D-ribulose 5-phosphate from D-glucose 6-phosphate (oxidative stage): step 2/3. Hydrolysis of 6-phosphogluconolactone to 6-phosphogluconate. The protein is 6-phosphogluconolactonase (pgl) of Neisseria meningitidis serogroup A / serotype 4A (strain DSM 15465 / Z2491).